The following is an 86-amino-acid chain: MGSLRVSTFAVAVVVCLSILLMSPTDGRRVCDSAAGLCSMLFSCNTQCNSLGRNFTGGECSDARFPGLSVCYCCHNVESSAEMESM.

A signal peptide spans 1-27 (MGSLRVSTFAVAVVVCLSILLMSPTDG). Intrachain disulfides connect Cys-31/Cys-74, Cys-38/Cys-60, Cys-44/Cys-71, and Cys-48/Cys-73.

The protein belongs to the DEFL family.

It is found in the secreted. This chain is Defensin-like protein 97 (LCR85), found in Arabidopsis thaliana (Mouse-ear cress).